The sequence spans 310 residues: Pantothenate kinase (310 aa).

Residue 95 to 102 (GSVAVGKS) coordinates ATP.

This sequence belongs to the prokaryotic pantothenate kinase family.

The protein resides in the cytoplasm. It carries out the reaction (R)-pantothenate + ATP = (R)-4'-phosphopantothenate + ADP + H(+). It functions in the pathway cofactor biosynthesis; coenzyme A biosynthesis; CoA from (R)-pantothenate: step 1/5. The chain is Pantothenate kinase from Rhodococcus jostii (strain RHA1).